Consider the following 771-residue polypeptide: 5-methyltetrahydropteroyltriglutamate--homocysteine methyltransferase (771 aa).

5-methyltetrahydropteroyltri-L-glutamate is bound by residues Arg13 to Lys16 and Lys128. Residues Ile451 to Ser453 and Glu504 each bind L-homocysteine. Residues Ile451–Ser453 and Glu504 each bind L-methionine. 5-methyltetrahydropteroyltri-L-glutamate contacts are provided by residues Arg535–Cys536 and Trp581. Residue Asp619 participates in L-homocysteine binding. Asp619 provides a ligand contact to L-methionine. Position 625 (Glu625) interacts with 5-methyltetrahydropteroyltri-L-glutamate. Residues His661, Cys663, and Glu685 each coordinate Zn(2+). Residue His714 is the Proton donor of the active site. Residue Cys746 coordinates Zn(2+).

The protein belongs to the vitamin-B12 independent methionine synthase family. The cofactor is Zn(2+).

It carries out the reaction 5-methyltetrahydropteroyltri-L-glutamate + L-homocysteine = tetrahydropteroyltri-L-glutamate + L-methionine. It participates in amino-acid biosynthesis; L-methionine biosynthesis via de novo pathway; L-methionine from L-homocysteine (MetE route): step 1/1. In terms of biological role, catalyzes the transfer of a methyl group from 5-methyltetrahydrofolate to homocysteine resulting in methionine formation. This Nitrobacter winogradskyi (strain ATCC 25391 / DSM 10237 / CIP 104748 / NCIMB 11846 / Nb-255) protein is 5-methyltetrahydropteroyltriglutamate--homocysteine methyltransferase.